The primary structure comprises 305 residues: Heterogeneous nuclear ribonucleoprotein A0 (305 aa).

Met1 carries the post-translational modification N-acetylmethionine. The RRM 1 domain occupies Cys7–Glu86. A Phosphoserine modification is found at Ser68. Lys80 participates in a covalent cross-link: Glycyl lysine isopeptide (Lys-Gly) (interchain with G-Cter in SUMO2). Ser84 carries the post-translational modification Phosphoserine; by MAPKAPK2. Glycyl lysine isopeptide (Lys-Gly) (interchain with G-Cter in SUMO2) cross-links involve residues Lys96, Lys98, Lys99, and Lys106. The 78-residue stretch at Lys98–Pro175 folds into the RRM 2 domain. Lys133 bears the N6-acetyllysine mark. Arg139 is modified (omega-N-methylarginine). Glycyl lysine isopeptide (Lys-Gly) (interchain with G-Cter in SUMO2) cross-links involve residues Lys154, Lys159, Lys172, and Lys176. Disordered stretches follow at residues Val174 to Gly214 and Gln262 to Phe305. Gly residues-rich tracts occupy residues Ser181 to Arg200 and Lys269 to Trp281. Ser188 carries the post-translational modification Phosphoserine. An Omega-N-methylarginine modification is found at Arg284. Over residues Tyr290–Phe305 the composition is skewed to gly residues. Arg291 carries the asymmetric dimethylarginine; alternate modification. Arg291 bears the Dimethylated arginine; alternate mark. Arg291 bears the Omega-N-methylarginine; alternate mark.

In terms of processing, phosphorylated at Ser-84 by MAPKAPK2 in response to LPS treatment, promoting stabilization of GADD45A mRNA. Post-translationally, arg-291 is dimethylated, probably to asymmetric dimethylarginine.

Its subcellular location is the nucleus. In terms of biological role, mRNA-binding component of ribonucleosomes. Specifically binds AU-rich element (ARE)-containing mRNAs. Involved in post-transcriptional regulation of cytokines mRNAs. This chain is Heterogeneous nuclear ribonucleoprotein A0 (HNRNPA0), found in Homo sapiens (Human).